The chain runs to 56 residues: Ribosome modulation factor (56 aa).

It belongs to the ribosome modulation factor family.

The protein localises to the cytoplasm. In terms of biological role, during stationary phase, converts 70S ribosomes to an inactive dimeric form (100S ribosomes). The protein is Ribosome modulation factor of Serratia proteamaculans (strain 568).